Here is a 296-residue protein sequence, read N- to C-terminus: F-box/LRR-repeat protein 15 (296 aa).

The 48-residue stretch at 16-63 (LLDLPWEDVLVSHVFCHLPLRLLVSLQRVSKSFRSLIQVYLDNCRTFD) folds into the F-box domain. LRR repeat units lie at residues 138 to 159 (RLQH…RSLA), 164 to 185 (MLRS…CYLA), 190 to 211 (ELRA…EEVA), 216 to 237 (EMER…RTLA), and 242 to 263 (KLQS…GVLR).

This sequence belongs to the FBXL15 family. In terms of assembly, part of the SCF (SKP1-CUL1-F-box) E3 ubiquitin-protein ligase complex SCF(FBXL15).

It localises to the cytoplasm. It participates in protein modification; protein ubiquitination. Substrate recognition component of a SCF (SKP1-CUL1-F-box protein) E3 ubiquitin-protein ligase complex which mediates the ubiquitination and subsequent proteasomal degradation of target proteins. Acts as a positive regulator of the BMP signaling pathway. Required for dorsal/ventral pattern formation. This Danio rerio (Zebrafish) protein is F-box/LRR-repeat protein 15 (fbxl15).